The sequence spans 325 residues: Tetraacyldisaccharide 4'-kinase (325 aa).

58 to 65 (TVGGSGKT) contributes to the ATP binding site.

Belongs to the LpxK family.

It carries out the reaction a lipid A disaccharide + ATP = a lipid IVA + ADP + H(+). It functions in the pathway glycolipid biosynthesis; lipid IV(A) biosynthesis; lipid IV(A) from (3R)-3-hydroxytetradecanoyl-[acyl-carrier-protein] and UDP-N-acetyl-alpha-D-glucosamine: step 6/6. Functionally, transfers the gamma-phosphate of ATP to the 4'-position of a tetraacyldisaccharide 1-phosphate intermediate (termed DS-1-P) to form tetraacyldisaccharide 1,4'-bis-phosphate (lipid IVA). This is Tetraacyldisaccharide 4'-kinase from Coxiella burnetii (strain CbuK_Q154) (Coxiella burnetii (strain Q154)).